The primary structure comprises 661 residues: Glycogen debranching enzyme (661 aa).

The active-site Nucleophile is the aspartate 338. Glutamate 373 serves as the catalytic Proton donor. Residues 460–481 form a disordered region; the sequence is NQLNGEGNRDGSDRNFSNNHGV.

It belongs to the glycosyl hydrolase 13 family.

It carries out the reaction Hydrolysis of (1-&gt;6)-alpha-D-glucosidic linkages to branches with degrees of polymerization of three or four glucose residues in limit dextrin.. It participates in glycan degradation; glycogen degradation. In terms of biological role, removes maltotriose and maltotetraose chains that are attached by 1,6-alpha-linkage to the limit dextrin main chain, generating a debranched limit dextrin. The protein is Glycogen debranching enzyme of Serratia proteamaculans (strain 568).